Here is a 62-residue protein sequence, read N- to C-terminus: Guanine nucleotide-binding protein subunit gamma (62 aa).

The segment at 40–62 is disordered; sequence DMLVSGPTDQHNPFQEKKSCSVL. The span at 53 to 62 shows a compositional bias: basic and acidic residues; that stretch reads FQEKKSCSVL. Cys-59 is modified (cysteine methyl ester). Cys-59 is lipidated: S-geranylgeranyl cysteine. Residues 60–62 constitute a propeptide, removed in mature form; sequence SVL.

The protein belongs to the G protein gamma family. G proteins are composed of 3 units, alpha, beta and gamma. Interacts with gpb-1 and gpb-2. In terms of tissue distribution, predominantly expressed in the central nervous system.

It localises to the cell membrane. In terms of biological role, guanine nucleotide-binding proteins (G proteins) are involved as a modulator or transducer in various transmembrane signaling systems. The beta and gamma chains are required for the GTPase activity, for replacement of GDP by GTP, and for G protein-effector interaction. This Caenorhabditis elegans protein is Guanine nucleotide-binding protein subunit gamma (gpc-1).